We begin with the raw amino-acid sequence, 70 residues long: ATP synthase subunit c (70 aa).

Transmembrane regions (helical) follow at residues 5–25 (AAGI…AIIV) and 47–67 (FIGV…SFIL).

It belongs to the ATPase C chain family. In terms of assembly, F-type ATPases have 2 components, F(1) - the catalytic core - and F(0) - the membrane proton channel. F(1) has five subunits: alpha(3), beta(3), gamma(1), delta(1), epsilon(1). F(0) has three main subunits: a(1), b(2) and c(10-14). The alpha and beta chains form an alternating ring which encloses part of the gamma chain. F(1) is attached to F(0) by a central stalk formed by the gamma and epsilon chains, while a peripheral stalk is formed by the delta and b chains.

The protein resides in the cell membrane. In terms of biological role, f(1)F(0) ATP synthase produces ATP from ADP in the presence of a proton or sodium gradient. F-type ATPases consist of two structural domains, F(1) containing the extramembraneous catalytic core and F(0) containing the membrane proton channel, linked together by a central stalk and a peripheral stalk. During catalysis, ATP synthesis in the catalytic domain of F(1) is coupled via a rotary mechanism of the central stalk subunits to proton translocation. Key component of the F(0) channel; it plays a direct role in translocation across the membrane. A homomeric c-ring of between 10-14 subunits forms the central stalk rotor element with the F(1) delta and epsilon subunits. The polypeptide is ATP synthase subunit c (Halalkalibacterium halodurans (strain ATCC BAA-125 / DSM 18197 / FERM 7344 / JCM 9153 / C-125) (Bacillus halodurans)).